A 312-amino-acid chain; its full sequence is Protein phosphatase PTC7 homolog fig (312 aa).

One can recognise a PPM-type phosphatase domain in the interval 42-306 (IQGSSKDQLA…DDITVILASV (265 aa)). 3 residues coordinate Mn(2+): aspartate 83, glycine 84, and aspartate 228.

The protein belongs to the PP2C family. It depends on Mg(2+) as a cofactor. Requires Mn(2+) as cofactor.

It carries out the reaction O-phospho-L-seryl-[protein] + H2O = L-seryl-[protein] + phosphate. The enzyme catalyses O-phospho-L-threonyl-[protein] + H2O = L-threonyl-[protein] + phosphate. The protein is Protein phosphatase PTC7 homolog fig of Drosophila mojavensis (Fruit fly).